An 817-amino-acid polypeptide reads, in one-letter code: Protein EFR3 homolog B (817 aa).

Serine 212, serine 214, and serine 216 each carry phosphoserine.

Belongs to the EFR3 family. As to quaternary structure, component of a phosphatidylinositol 4-kinase (PI4K) complex, composed of PI4KA, EFR3 (EFR3A or EFR3B), TTC7 (TTC7A or TTC7B) and HYCC (HYCC1 or HYCC2). Post-translationally, palmitoylated at its N-terminus, anchoring the protein to the plasma membrane.

It is found in the cell membrane. The protein resides in the cytoplasm. The protein localises to the cytosol. Component of a complex required to localize phosphatidylinositol 4-kinase (PI4K) to the plasma membrane. The complex acts as a regulator of phosphatidylinositol 4-phosphate (PtdIns(4)P) synthesis. In the complex, EFR3B probably acts as the membrane-anchoring component. Also involved in responsiveness to G-protein-coupled receptors; it is however unclear whether this role is direct or indirect. In Homo sapiens (Human), this protein is Protein EFR3 homolog B.